Consider the following 154-residue polypeptide: MNIVEGKLSAEGLKFGIVVGRFNSFITERLLEGAIDCILRHGGSKENIEIVKVPGSFEIPLTAKKLAKSGKYDAVICLGAVIRGSTPHFDYVANEVTKGIAQVSLETEVPIGYGILTTDTIEQAVERAGTKMGNKGFDAAMVAIEMANVLKSIG.

Residues F22, 56–58 (SFE), and 80–82 (AVI) each bind 5-amino-6-(D-ribitylamino)uracil. 85-86 (ST) is a binding site for (2S)-2-hydroxy-3-oxobutyl phosphate. H88 serves as the catalytic Proton donor. Y113 serves as a coordination point for 5-amino-6-(D-ribitylamino)uracil. Residue R127 participates in (2S)-2-hydroxy-3-oxobutyl phosphate binding.

It belongs to the DMRL synthase family. As to quaternary structure, forms an icosahedral capsid composed of 60 subunits, arranged as a dodecamer of pentamers.

It catalyses the reaction (2S)-2-hydroxy-3-oxobutyl phosphate + 5-amino-6-(D-ribitylamino)uracil = 6,7-dimethyl-8-(1-D-ribityl)lumazine + phosphate + 2 H2O + H(+). It functions in the pathway cofactor biosynthesis; riboflavin biosynthesis; riboflavin from 2-hydroxy-3-oxobutyl phosphate and 5-amino-6-(D-ribitylamino)uracil: step 1/2. Catalyzes the formation of 6,7-dimethyl-8-ribityllumazine by condensation of 5-amino-6-(D-ribitylamino)uracil with 3,4-dihydroxy-2-butanone 4-phosphate. This is the penultimate step in the biosynthesis of riboflavin. This chain is 6,7-dimethyl-8-ribityllumazine synthase, found in Sulfurihydrogenibium sp. (strain YO3AOP1).